The primary structure comprises 609 residues: Pentatricopeptide repeat-containing protein At1g03540 (609 aa).

14 PPR repeats span residues 25–59 (SAPT…EIPA), 60–94 (TPKL…GLET), 95–126 (DRNV…RFVK), 127–161 (DAIS…GLDA), 162–196 (NEFT…GFEW), 197–227 (NHFI…MPEP), 228–263 (DVIC…GLVP), 264–298 (DGST…GIGS), 299–329 (NVVV…MSKK), 330–364 (NSVS…DLYC), 396–426 (NVIV…MSIR), 427–461 (NMIT…GIKP), 462–497 (DYIS…GIKP), and 498–532 (GTEH…NDAS). Residues 533 to 609 (LWGVLLGPCA…TVGQSWIDAH (77 aa)) form a type E motif region.

The protein belongs to the PPR family. PCMP-E subfamily.

The sequence is that of Pentatricopeptide repeat-containing protein At1g03540 (PCMP-E4) from Arabidopsis thaliana (Mouse-ear cress).